A 477-amino-acid chain; its full sequence is Monocarboxylate transporter 12-B (477 aa).

The Cytoplasmic segment spans residues 1–9 (MAQEKKKGG). Transmembrane regions (helical) follow at residues 10–30 (VLPP…VVTV), 58–78 (AWIH…GSLI), 86–106 (IAVI…SFAT), 116–136 (GLLT…MVGI), 148–168 (IAMS…QLLI), 178–198 (LILG…RPII), 253–273 (FLVL…PFVY), 289–309 (AFLM…FGWL), 320–340 (NICY…IPLL), 344–364 (VWLV…VALI), 383–403 (VVYF…GWLV), and 413–433 (FFLS…VAII). The Cytoplasmic segment spans residues 434–477 (RYCQRNQKKNSLSKIPKLVSCEGKQVDYYPPKNKDLMLIIPATS).

The protein belongs to the major facilitator superfamily. Monocarboxylate porter (TC 2.A.1.13) family.

It is found in the cell membrane. The protein localises to the basolateral cell membrane. It catalyses the reaction creatine(in) = creatine(out). It carries out the reaction guanidinoacetate(in) = guanidinoacetate(out). Functionally, functions as a transporter for creatine and as well for its precursor guanidinoacetate. Transport of creatine and GAA is independent of resting membrane potential and extracellular Na(+), Cl(-), or pH. Contributes to the process of creatine biosynthesis and distribution. The protein is Monocarboxylate transporter 12-B (slc16a12b) of Danio rerio (Zebrafish).